Consider the following 159-residue polypeptide: Ribonuclease P protein component 2 (159 aa).

Belongs to the eukaryotic/archaeal RNase P protein component 2 family. Consists of a catalytic RNA component and at least 4-5 protein subunits.

The protein localises to the cytoplasm. The catalysed reaction is Endonucleolytic cleavage of RNA, removing 5'-extranucleotides from tRNA precursor.. Its function is as follows. Part of ribonuclease P, a protein complex that generates mature tRNA molecules by cleaving their 5'-ends. This Halorubrum lacusprofundi (strain ATCC 49239 / DSM 5036 / JCM 8891 / ACAM 34) protein is Ribonuclease P protein component 2.